The primary structure comprises 89 residues: Small ribosomal subunit protein uS15 (89 aa).

The protein belongs to the universal ribosomal protein uS15 family. As to quaternary structure, part of the 30S ribosomal subunit. Forms a bridge to the 50S subunit in the 70S ribosome, contacting the 23S rRNA.

One of the primary rRNA binding proteins, it binds directly to 16S rRNA where it helps nucleate assembly of the platform of the 30S subunit by binding and bridging several RNA helices of the 16S rRNA. In terms of biological role, forms an intersubunit bridge (bridge B4) with the 23S rRNA of the 50S subunit in the ribosome. The chain is Small ribosomal subunit protein uS15 from Trichodesmium erythraeum (strain IMS101).